Here is a 310-residue protein sequence, read N- to C-terminus: Lipoyl synthase (310 aa).

C41, C46, C52, C68, C72, C75, and S281 together coordinate [4Fe-4S] cluster. In terms of domain architecture, Radical SAM core spans 54–270 (GERRTATFMI…RKVAMEKGFK (217 aa)). Residues 285-310 (DEQVNEAAKERQRIGDEKLEAAKNEA) form a disordered region.

The protein belongs to the radical SAM superfamily. Lipoyl synthase family. It depends on [4Fe-4S] cluster as a cofactor.

Its subcellular location is the cytoplasm. It catalyses the reaction [[Fe-S] cluster scaffold protein carrying a second [4Fe-4S](2+) cluster] + N(6)-octanoyl-L-lysyl-[protein] + 2 oxidized [2Fe-2S]-[ferredoxin] + 2 S-adenosyl-L-methionine + 4 H(+) = [[Fe-S] cluster scaffold protein] + N(6)-[(R)-dihydrolipoyl]-L-lysyl-[protein] + 4 Fe(3+) + 2 hydrogen sulfide + 2 5'-deoxyadenosine + 2 L-methionine + 2 reduced [2Fe-2S]-[ferredoxin]. It functions in the pathway protein modification; protein lipoylation via endogenous pathway; protein N(6)-(lipoyl)lysine from octanoyl-[acyl-carrier-protein]. In terms of biological role, catalyzes the radical-mediated insertion of two sulfur atoms into the C-6 and C-8 positions of the octanoyl moiety bound to the lipoyl domains of lipoate-dependent enzymes, thereby converting the octanoylated domains into lipoylated derivatives. The protein is Lipoyl synthase of Staphylococcus carnosus (strain TM300).